The primary structure comprises 281 residues: MTSYENHQALHGLTLGKSTDYRDVYDASLLQPVPRSLNRDPLGLRADALPFHGADIWTMYELSWLNRNGLPQVAIGQVEINATSVNLVESKSFKLYLNSFNQTQFESLEAVRETLERDLRACAQGDVSVTLRRLEDVEGEPVARFSGDCIDNQDINITDYEFDAALLSGAAGEETVEETLVSHLLKSNCLITHQPDWGSVQIHYRGPKICREKLLRYLVSFRHHNEFHEQCVERIFNDITRFCQPEQLSVYARYTRRGGLDINPWRSNGDFTPATGRLARQ.

A substrate-binding site is contributed by 88–90 (VES). 90 to 91 (SK) serves as a coordination point for NADPH. The Thioimide intermediate role is filled by cysteine 189. Catalysis depends on aspartate 196, which acts as the Proton donor. 228–229 (HE) serves as a coordination point for substrate. Residue 257–258 (RG) participates in NADPH binding.

It belongs to the GTP cyclohydrolase I family. QueF type 2 subfamily. As to quaternary structure, homodimer.

The protein resides in the cytoplasm. It carries out the reaction 7-aminomethyl-7-carbaguanine + 2 NADP(+) = 7-cyano-7-deazaguanine + 2 NADPH + 3 H(+). It participates in tRNA modification; tRNA-queuosine biosynthesis. Its function is as follows. Catalyzes the NADPH-dependent reduction of 7-cyano-7-deazaguanine (preQ0) to 7-aminomethyl-7-deazaguanine (preQ1). The sequence is that of NADPH-dependent 7-cyano-7-deazaguanine reductase from Cronobacter sakazakii (strain ATCC BAA-894) (Enterobacter sakazakii).